A 179-amino-acid polypeptide reads, in one-letter code: O-acetyl-ADP-ribose deacetylase (179 aa).

In terms of domain architecture, Macro spans 1–175 (MTSRLQVIQG…LYARLLTQQG (175 aa)). Residues 11-12 (DI), Asn-25, 33-35 (GVD), and 122-126 (STGVY) contribute to the substrate site. Asp-35 (proton acceptor) is an active-site residue.

It belongs to the MacroD-type family. YmdB subfamily. As to quaternary structure, homodimer. Interacts with RNase III.

It carries out the reaction 3''-O-acetyl-ADP-D-ribose + H2O = ADP-D-ribose + acetate + H(+). The enzyme catalyses 2''-O-acetyl-ADP-D-ribose + H2O = ADP-D-ribose + acetate + H(+). Functionally, deacetylates O-acetyl-ADP ribose to yield ADP-ribose and free acetate. Down-regulates ribonuclease 3 (RNase III) activity. Acts by interacting directly with the region of the ribonuclease that is required for dimerization/activation. The sequence is that of O-acetyl-ADP-ribose deacetylase from Salmonella gallinarum (strain 287/91 / NCTC 13346).